An 832-amino-acid polypeptide reads, in one-letter code: Protein monoglycylase TTLL8 (832 aa).

Pro residues predominate over residues 1 to 13; that stretch reads MSCPPTPNPPFRP. 2 disordered regions span residues 1–84 and 277–304; these read MSCP…QDLS and GKSKKEEAKNSDPSPKKDPENPDLKLPS. Basic and acidic residues-rich tracts occupy residues 46-59, 66-75, and 280-299; these read QLREASMENGERKK, DGDHKEENKL, and KKEEAKNSDPSPKKDPENPD. In terms of domain architecture, TTL spans 271–624; sequence YCSKVKGKSK…RKLDRNCDIG (354 aa). Residues K397, 403-404, 435-438, 448-450, and 492-493 contribute to the ATP site; these read RG, QKYI, KFD, and CN. An a protein-binding site is contributed by R403. S495 contributes to the L-glutamate binding site. Residues D570, E583, and N585 each coordinate Mg(2+). ATP is bound at residue E583.

Requires Mg(2+) as cofactor. As to expression, highly expressed in testis. Expressed in brain, heart, kidney, liver, lung, muscle, spleen and trachea. Expressed in sperm flagellum. In the brain, specifically expressed in ependymal cilia.

The protein localises to the cytoplasm. Its subcellular location is the cytoskeleton. It localises to the cell projection. It is found in the cilium. The protein resides in the cilium axoneme. The protein localises to the flagellum axoneme. It carries out the reaction L-glutamyl-[protein] + glycine + ATP = glycyl-L-glutamyl-[protein] + ADP + phosphate + H(+). In terms of biological role, monoglycylase which modifies both tubulin and non-tubulin proteins, adding a single glycine on the gamma-carboxyl groups of specific glutamate residues to generate monoglycine side chains within the C-terminal tail of target proteins. Not involved in elongation step of the polyglycylation reaction. Preferentially monoglycylates alpha-tubulin over beta-tubulin. Together with TTLL3, mediates microtubule glycylation of primary and motile cilia, which is essential for their stability and maintenance. Together with TTLL3, glycylates sperm flagella which regulates axonemal dynein motor activity, thereby controlling flagellar beat, directional sperm swimming and male fertility. Monoglycylates non-tubulin proteins such as ANP32A, ANP32B, SET, NCL and NAP1. The sequence is that of Protein monoglycylase TTLL8 from Mus musculus (Mouse).